The following is a 195-amino-acid chain: Archaetidylinositol phosphate synthase (195 aa).

Helical transmembrane passes span 27–47 and 54–74; these read IALPADYITLTGFLVACAASA and LITGAALLAASGFIDVLDGAV. Positions 68, 71, 89, and 93 each coordinate Mg(2+). D93 (proton acceptor) is an active-site residue. Helical transmembrane passes span 99–119 and 158–178; these read IIIIGITAGGFTGLLTGLLAL and LAGYLIHPWFMDAAIIVLAAL.

This sequence belongs to the CDP-alcohol phosphatidyltransferase class-I family. It depends on Mn(2+) as a cofactor. Mg(2+) serves as cofactor.

The protein resides in the cell membrane. The enzyme catalyses CDP-2,3-bis-O-(phytanyl)-sn-glycerol + 1D-myo-inositol 3-phosphate = saturated 1-archaetidyl-1D-myo-inositol 3-phosphate + CMP + H(+). Its pathway is lipid metabolism; phospholipid metabolism. Its function is as follows. Catalyzes the formation of archaetidylinositol phosphate (AIP) from CDP-archaeol (CDP-ArOH or CDP-2,3-bis-(O-phytanyl)-sn-glycerol) and 1L-myo-inositol 1-phosphate (IP or 1D-myo-inositol 3-phosphate). AIP is a precursor of archaetidyl-myo-inositol (AI), an ether-type inositol phospholipid ubiquitously distributed in archaea membranes and essential for glycolipid biosynthesis in archaea. This Methanothermobacter thermautotrophicus (strain ATCC 29096 / DSM 1053 / JCM 10044 / NBRC 100330 / Delta H) (Methanobacterium thermoautotrophicum) protein is Archaetidylinositol phosphate synthase.